A 611-amino-acid polypeptide reads, in one-letter code: Protein Pixie (611 aa).

2 4Fe-4S ferredoxin-type domains span residues 15–45 (RIAI…MGKL) and 54–83 (KIAS…IINL). 2 ABC transporter domains span residues 78 to 323 (ITII…FLDG) and 350 to 570 (IKRM…LELL). ATP is bound by residues 118–125 (GQNGIGKS) and 387–394 (GENGTGKT).

The protein belongs to the ABC transporter superfamily. ABCE family. Interacts with components of eIF3 complex, namely eIF3a, eIF3j, eIF3b, eIF3c and eIF3i. Associates with the 40S ribosome subunit in an ATP-dependent manner and independently from the presence of the eIF3 complex. Forms a complex with Git and Pak; the interaction with Pak may be mediated by pix/dPIX. Ubiquitinated by Cnot4. Ubiquitination mediates the recruitment of autophagy receptors to the mitochondrial outer membrane and initiates mitophagy. Expressed in early and late larval imaginal disks (at protein level).

Its subcellular location is the cytoplasm. In terms of biological role, plays a role in translation initiation and quality control of translation. Together with pelo and HBS1, is required for 48S complex formation from 80S ribosomes and dissociation of vacant 80S ribosomes. Stabilizes core components of eIF3 complex promoting their assembly into translation initiation-competent complexes. Together with pelo and HBS1, recognizes stalled ribosomes and promotes dissociation of elongation complexes assembled on non-stop mRNAs; this triggers endonucleolytic cleavage of the mRNA, a mechanism to release non-functional ribosomes and to degrade damaged mRNAs as part of the No-Go Decay (NGD) pathway. Plays a role in the regulation of mRNA turnover. Plays a role in quality control of translation of mitochondrial outer membrane-localized mRNA. As part of the Pink1-regulated signaling, ubiquitinated by Cnot4 upon mitochondria damage; this modification generates polyubiquitin signals that recruits autophagy receptors to the mitochondrial outer membrane to initiate mitophagy. Required in the wing disk for cell division and growth as well as cell survival. During muscle embryogenesis, required for the recruitment of Pak to muscle attachments in the embryo, hence may play a role in proper muscle morphogenesis and proper guidance and targeting of subsets of myotubes. In Drosophila melanogaster (Fruit fly), this protein is Protein Pixie.